We begin with the raw amino-acid sequence, 335 residues long: Stearoyl-CoA desaturase 5 (335 aa).

Residues 1–54 (MPGPAVDAEKVPFRSAKEEIRAGVGVEGSEGGGGGGGRERPGARGHRQDIVWRN) lie on the Cytoplasmic side of the membrane. Residues 24–44 (VGVEGSEGGGGGGGRERPGAR) form a disordered region. A compositionally biased stretch (gly residues) spans 25–36 (GVEGSEGGGGGG). N54 provides a ligand contact to substrate. Residues 55 to 75 (VFLMSLLHLAAVYSLVLIPKA) traverse the membrane as a helical segment. Residues 76–77 (QP) are Lumenal-facing. A helical membrane pass occupies residues 78-98 (LTLLWAYFCFLLTALGVTAGA). H99 and H104 together coordinate Fe cation. The short motif at 99 to 104 (HRLWSH) is the Histidine box-1 element. The Cytoplasmic portion of the chain corresponds to 99-198 (HRLWSHRSYK…VVRFQRKYYK (100 aa)). N127, R134, and D135 together coordinate substrate. Positions 136, 139, and 140 each coordinate Fe cation. The Histidine box-2 signature appears at 136–140 (HRVHH). Residues R167 and K168 each coordinate substrate. The chain crosses the membrane as a helical span at residues 199–219 (ITVVLMCFVVPTLVPWYIWGE). Topologically, residues 220 to 227 (SLWNSYFL) are lumenal. Residues 228 to 247 (ASILRYTISLNVTWLVNSVA) traverse the membrane as a helical segment. W241 contributes to the substrate binding site. Residues H248, H277, H280, and H281 each contribute to the Fe cation site. The Cytoplasmic segment spans residues 248–335 (HMYGNRPYDK…RKARTGDGSA (88 aa)). Positions 277–281 (HNYHH) match the Histidine box-3 motif.

Belongs to the fatty acid desaturase type 1 family. May self-associate and form homodimers. Fe(2+) is required as a cofactor. As to expression, detected in brain.

The protein resides in the endoplasmic reticulum membrane. The catalysed reaction is octadecanoyl-CoA + 2 Fe(II)-[cytochrome b5] + O2 + 2 H(+) = (9Z)-octadecenoyl-CoA + 2 Fe(III)-[cytochrome b5] + 2 H2O. It catalyses the reaction hexadecanoyl-CoA + 2 Fe(II)-[cytochrome b5] + O2 + 2 H(+) = (9Z)-hexadecenoyl-CoA + 2 Fe(III)-[cytochrome b5] + 2 H2O. Its function is as follows. Stearoyl-CoA desaturase that utilizes O(2) and electrons from reduced cytochrome b5 to introduce the first double bond into saturated fatty acyl-CoA substrates. Catalyzes the insertion of a cis double bond at the delta-9 position into fatty acyl-CoA substrates including palmitoyl-CoA and stearoyl-CoA. Gives rise to a mixture of 16:1 and 18:1 unsaturated fatty acids. Involved in neuronal cell proliferation and differentiation through down-regulation of EGFR/AKT/MAPK and Wnt signaling pathways. The chain is Stearoyl-CoA desaturase 5 (SCD5) from Bos taurus (Bovine).